Here is a 590-residue protein sequence, read N- to C-terminus: 2-hydroxyacyl-CoA lyase (590 aa).

Residues Gly43, Gln128, Gln255, 273-274 (RS), and Arg362 each bind 2-hydroxyisobutanoyl-CoA. 410-412 (GDL) serves as a coordination point for thiamine diphosphate. 2-hydroxyisobutanoyl-CoA is bound at residue Arg417. Gly433 is a thiamine diphosphate binding site. Residue Asp460 coordinates Mg(2+). Thiamine diphosphate is bound by residues 461–462 (GA) and 487–492 (NRAWNI). Mg(2+)-binding residues include Asn487 and Ala489. The active-site Proton acceptor is the Glu493. 561 to 564 (DSGK) lines the 2-hydroxyisobutanoyl-CoA pocket. The interval 566 to 590 (LGFVPDYQALTPWNDAEVARRQEGI) is C-terminal lid.

This sequence belongs to the TPP enzyme family. As to quaternary structure, a homotetramer formed by a dimer of dimers; active sites are located in the dimer interface. Requires Mg(2+) as cofactor. The cofactor is thiamine diphosphate.

It catalyses the reaction 2-hydroxyisobutanoyl-CoA = formyl-CoA + acetone. Activity is stimulated by thiamine diphosphate. Its function is as follows. A lyase that reversibly degrades 2-hydroxyisobutyryl-CoA (2-HIB-CoA) to acetone and formyl-CoA. Probably also cleaves 2-hydroxy-2-methylbutyryl-CoA to butanone and formyl-CoA. Does not act on 2-hydroxy-2-ethylbutyryl-CoA. A C-terminal lid closes the active site upon substrate binding, and with residues Leu-127 and Ile-492 restricts the size of the active site cavity so it can only use short-chain (C4 and C5) acyl substrates. Part of a pathway that allows cells to grow on 2-methylpropane-1,2-diol or 2-hydroxyisobutyric acid (2-HIBA) as a sole carbon source. This is 2-hydroxyacyl-CoA lyase from Actinomycetospora chiangmaiensis (strain DSM 45062 / JCM 15998 / CCTCC AA 205017 / NBRC 104400 / YIM 0006).